A 154-amino-acid chain; its full sequence is Myoglobin (154 aa).

Positions 2–148 (GLSDGEWQLV…FRNDMAAKYK (147 aa)) constitute a Globin domain. Ser-4 carries the phosphoserine modification. Nitrite is bound at residue His-65. His-65 serves as a coordination point for O2. Thr-68 bears the Phosphothreonine mark. His-94 lines the heme b pocket.

The protein belongs to the globin family. In terms of assembly, monomeric.

The protein resides in the cytoplasm. It is found in the sarcoplasm. The enzyme catalyses Fe(III)-heme b-[protein] + nitric oxide + H2O = Fe(II)-heme b-[protein] + nitrite + 2 H(+). It carries out the reaction H2O2 + AH2 = A + 2 H2O. Functionally, monomeric heme protein which primary function is to store oxygen and facilitate its diffusion within muscle tissues. Reversibly binds oxygen through a pentacoordinated heme iron and enables its timely and efficient release as needed during periods of heightened demand. Depending on the oxidative conditions of tissues and cells, and in addition to its ability to bind oxygen, it also has a nitrite reductase activity whereby it regulates the production of bioactive nitric oxide. Under stress conditions, like hypoxia and anoxia, it also protects cells against reactive oxygen species thanks to its pseudoperoxidase activity. In Lagothrix lagotricha (Brown woolly monkey), this protein is Myoglobin (MB).